Reading from the N-terminus, the 303-residue chain is MMSSENRSHFSASCSSITEEARAKINLALHVTGQRPDGYHLLDMLVTFADHGDRLDFVPSPTDAFTLSGRFGGTLAGGSGTNLVLKARDLLRAAIGPLAFPVRIHLEKNLPIASGIGGGSADAAATLRGLTRLWGATLPEEALAALALKLGADVPMCLESRPLIARGIGEELEPVPELPAFAMVLANPLKGVSTPEVFRRLAEKNNPALSLALSRPQTADWLAAIAAARNDLEPPARELVPEIAAISAMLQAHGALLTRMSGSGATCFGIFATMAAAKDAAAALHEARLDWYFQATETVSGGV.

Residue Lys-24 is part of the active site. Position 111 to 121 (111 to 121 (PIASGIGGGSA)) interacts with ATP. The active site involves Asp-153.

It belongs to the GHMP kinase family. IspE subfamily.

The enzyme catalyses 4-CDP-2-C-methyl-D-erythritol + ATP = 4-CDP-2-C-methyl-D-erythritol 2-phosphate + ADP + H(+). The protein operates within isoprenoid biosynthesis; isopentenyl diphosphate biosynthesis via DXP pathway; isopentenyl diphosphate from 1-deoxy-D-xylulose 5-phosphate: step 3/6. Catalyzes the phosphorylation of the position 2 hydroxy group of 4-diphosphocytidyl-2C-methyl-D-erythritol. The polypeptide is 4-diphosphocytidyl-2-C-methyl-D-erythritol kinase (Rhizobium johnstonii (strain DSM 114642 / LMG 32736 / 3841) (Rhizobium leguminosarum bv. viciae)).